The following is a 439-amino-acid chain: Proline--tRNA ligase (439 aa).

It belongs to the class-II aminoacyl-tRNA synthetase family. ProS type 2 subfamily. In terms of assembly, homodimer.

Its subcellular location is the cytoplasm. The catalysed reaction is tRNA(Pro) + L-proline + ATP = L-prolyl-tRNA(Pro) + AMP + diphosphate. Catalyzes the attachment of proline to tRNA(Pro) in a two-step reaction: proline is first activated by ATP to form Pro-AMP and then transferred to the acceptor end of tRNA(Pro). The sequence is that of Proline--tRNA ligase from Nitrobacter winogradskyi (strain ATCC 25391 / DSM 10237 / CIP 104748 / NCIMB 11846 / Nb-255).